Here is a 460-residue protein sequence, read N- to C-terminus: MPLRLLLLLLWLWGLQWAETDSEGQTTTGELYQRWEHYGQECQKMLETTEPPSGLACNGSFDMYACWNYTAANTTARVSCPWYLPWFRQVSAGFVFRQCGSDGQWGSWRDHTQCENPEKNGAFQDQTLILERLQIMYTVGYSLSLTTLLLALLILSLFRRLHCTRNYIHMNLFTSFMLRAAAILTRDQLLPPLGPYTGDQAPTPWNQALAACRTAQIMTQYCVGANYTWLLVEGVYLHHLLVIVGRSEKGHFRCYLLLGWGAPALFVIPWVIVRYLRENTQCWERNEVKAIWWIIRTPILITILINFLIFIRILGILVSKLRTRQMRCPDYRLRLARSTLTLVPLLGVHEVVFAPVTEEQVEGSLRFAKLAFEIFLSSFQGFLVSVLYCFINKEVQSEIRQGWRHRRLRLSLQEQRPRPHQELAPRAVPLSSACREAAVGNALPSGMLHVPGDEVLESYC.

Residues 1 to 18 (MPLRLLLLLLWLWGLQWA) form the signal peptide. Topologically, residues 19–134 (ETDSEGQTTT…DQTLILERLQ (116 aa)) are extracellular. Cystine bridges form between Cys42–Cys66, Cys57–Cys99, and Cys80–Cys114. N-linked (GlcNAc...) asparagine glycosylation is found at Asn58, Asn68, and Asn73. The chain crosses the membrane as a helical span at residues 135–155 (IMYTVGYSLSLTTLLLALLIL). The Cytoplasmic segment spans residues 156-166 (SLFRRLHCTRN). The chain crosses the membrane as a helical span at residues 167 to 185 (YIHMNLFTSFMLRAAAILT). Topologically, residues 186–222 (RDQLLPPLGPYTGDQAPTPWNQALAACRTAQIMTQYC) are extracellular. A helical membrane pass occupies residues 223–243 (VGANYTWLLVEGVYLHHLLVI). At 244-255 (VGRSEKGHFRCY) the chain is on the cytoplasmic side. Residues 256–276 (LLLGWGAPALFVIPWVIVRYL) form a helical membrane-spanning segment. Residues 277–297 (RENTQCWERNEVKAIWWIIRT) lie on the Extracellular side of the membrane. A helical transmembrane segment spans residues 298–318 (PILITILINFLIFIRILGILV). Topologically, residues 319-337 (SKLRTRQMRCPDYRLRLAR) are cytoplasmic. Residues 338–358 (STLTLVPLLGVHEVVFAPVTE) form a helical membrane-spanning segment. Over 359 to 370 (EQVEGSLRFAKL) the chain is Extracellular. A helical transmembrane segment spans residues 371–391 (AFEIFLSSFQGFLVSVLYCFI). Residues 392–460 (NKEVQSEIRQ…PGDEVLESYC (69 aa)) are Cytoplasmic-facing.

Belongs to the G-protein coupled receptor 2 family. As to quaternary structure, may form homodimers and heterodimers with GLP1R. N-glycosylation is required for cell surface expression and lengthens receptor half-life by preventing degradation in the ER.

The protein resides in the cell membrane. In terms of biological role, this is a receptor for GIP. The activity of this receptor is mediated by G proteins which activate adenylyl cyclase. This is Gastric inhibitory polypeptide receptor (Gipr) from Mus musculus (Mouse).